Consider the following 237-residue polypeptide: Proteasome subunit alpha (237 aa).

It belongs to the peptidase T1A family. As to quaternary structure, the 20S proteasome core is composed of 14 alpha and 14 beta subunits that assemble into four stacked heptameric rings, resulting in a barrel-shaped structure. The two inner rings, each composed of seven catalytic beta subunits, are sandwiched by two outer rings, each composed of seven alpha subunits. The catalytic chamber with the active sites is on the inside of the barrel. Has a gated structure, the ends of the cylinder being occluded by the N-termini of the alpha-subunits. Is capped by the proteasome-associated ATPase, ARC.

Its subcellular location is the cytoplasm. Its pathway is protein degradation; proteasomal Pup-dependent pathway. The formation of the proteasomal ATPase ARC-20S proteasome complex, likely via the docking of the C-termini of ARC into the intersubunit pockets in the alpha-rings, may trigger opening of the gate for substrate entry. Interconversion between the open-gate and close-gate conformations leads to a dynamic regulation of the 20S proteasome proteolysis activity. Component of the proteasome core, a large protease complex with broad specificity involved in protein degradation. The protein is Proteasome subunit alpha of Kineococcus radiotolerans (strain ATCC BAA-149 / DSM 14245 / SRS30216).